The primary structure comprises 371 residues: Solute carrier family 35 member F6 (371 aa).

The signal sequence occupies residues 1-18; that stretch reads MAWTKYQLFLAGLMLVTG. A run of 2 helical transmembrane segments spans residues 48-68 and 89-109; these read FLQA…FYLL and LLFL…YVAL. In terms of domain architecture, EamA spans 104–160; sequence LMYVALNMTSASSFQMLRGAVIIFTGLFSVAFLGRRLVLSQWLGILATIAGLVVVGL. N-linked (GlcNAc...) asparagine glycosylation occurs at Asn-110. Transmembrane regions (helical) follow at residues 117–137, 140–160, 176–196, 216–236, 261–281, 295–312, and 317–336; these read FQML…AFLG, LVLS…VVGL, VITG…QMVL, GLFG…IPAG, LIAV…FAGI, LDSL…ALGW, and ALQI…YNGL. A disordered region spans residues 352–371; that stretch reads EESEQERLLGGTRTPINDAS. Phosphothreonine is present on Thr-365.

It belongs to the SLC35F solute transporter family. In terms of assembly, interacts with SLC25A5. In terms of tissue distribution, expressed in pancreatic ductal adenocarcinoma (PDAC) (at protein level). Strongly expressed in prostate and thyroid. Weakly expressed in lung, heart, liver and kidney.

The protein resides in the mitochondrion. It is found in the lysosome membrane. In terms of biological role, involved in the maintenance of mitochondrial membrane potential in pancreatic ductal adenocarcinoma (PDAC) cells. Promotes pancreatic ductal adenocarcinoma (PDAC) cell growth. May play a role as a nucleotide-sugar transporter. In Homo sapiens (Human), this protein is Solute carrier family 35 member F6 (SLC35F6).